The sequence spans 474 residues: ATP synthase subunit beta (474 aa).

151-158 (GGAGVGKT) provides a ligand contact to ATP.

This sequence belongs to the ATPase alpha/beta chains family. As to quaternary structure, F-type ATPases have 2 components, CF(1) - the catalytic core - and CF(0) - the membrane proton channel. CF(1) has five subunits: alpha(3), beta(3), gamma(1), delta(1), epsilon(1). CF(0) has three main subunits: a(1), b(2) and c(9-12). The alpha and beta chains form an alternating ring which encloses part of the gamma chain. CF(1) is attached to CF(0) by a central stalk formed by the gamma and epsilon chains, while a peripheral stalk is formed by the delta and b chains.

It localises to the cell inner membrane. The enzyme catalyses ATP + H2O + 4 H(+)(in) = ADP + phosphate + 5 H(+)(out). Its function is as follows. Produces ATP from ADP in the presence of a proton gradient across the membrane. The catalytic sites are hosted primarily by the beta subunits. This Paracoccus denitrificans (strain Pd 1222) protein is ATP synthase subunit beta.